We begin with the raw amino-acid sequence, 72 residues long: MILFPSVDELLKHIDSRYSLVMLASKRANELDAGAAPLLEHYDSSKSVGKALEEILAGKVTIDPDHTEDLQD.

Belongs to the RNA polymerase subunit omega family. In terms of assembly, the RNAP catalytic core consists of 2 alpha, 1 beta, 1 beta' and 1 omega subunit. When a sigma factor is associated with the core the holoenzyme is formed, which can initiate transcription.

The enzyme catalyses RNA(n) + a ribonucleoside 5'-triphosphate = RNA(n+1) + diphosphate. Promotes RNA polymerase assembly. Latches the N- and C-terminal regions of the beta' subunit thereby facilitating its interaction with the beta and alpha subunits. This chain is DNA-directed RNA polymerase subunit omega, found in Limosilactobacillus reuteri (strain DSM 20016) (Lactobacillus reuteri).